The primary structure comprises 77 residues: Translation initiation factor IF-1, chloroplastic (77 aa).

In terms of domain architecture, S1-like spans M1 to R71.

Belongs to the IF-1 family. Component of the 30S ribosomal translation pre-initiation complex which assembles on the 30S ribosome in the order IF-2 and IF-3, IF-1 and N-formylmethionyl-tRNA(fMet); mRNA recruitment can occur at any time during PIC assembly.

It localises to the plastid. Its subcellular location is the chloroplast. Functionally, one of the essential components for the initiation of protein synthesis. Stabilizes the binding of IF-2 and IF-3 on the 30S subunit to which N-formylmethionyl-tRNA(fMet) subsequently binds. Helps modulate mRNA selection, yielding the 30S pre-initiation complex (PIC). Upon addition of the 50S ribosomal subunit IF-1, IF-2 and IF-3 are released leaving the mature 70S translation initiation complex. The sequence is that of Translation initiation factor IF-1, chloroplastic from Asarum canadense (Wild ginger).